The sequence spans 371 residues: Protein arginine N-methyltransferase 1 (371 aa).

One can recognise an SAM-dependent MTase PRMT-type domain in the interval 50–361 (KDYYFDSYAH…DLDFKGQLCE (312 aa)). S-adenosyl-L-methionine-binding residues include H63, R72, G96, and E118. Residue R72 coordinates S-adenosyl-L-homocysteine. E118 is a binding site for S-adenosyl-L-homocysteine. Position 134 is an N6-succinyllysine (K134). A Glycyl lysine isopeptide (Lys-Gly) (interchain with G-Cter in ubiquitin) cross-link involves residue K145. S-adenosyl-L-homocysteine is bound by residues V146 and E147. Residue E147 participates in S-adenosyl-L-methionine binding. Catalysis depends on residues E162 and E171. An N6-acetyllysine mark is found at K228 and K233. 2 positions are modified to phosphoserine: S304 and S307.

The protein belongs to the class I-like SAM-binding methyltransferase superfamily. Protein arginine N-methyltransferase family. Homodimer. Homooctamer; individual homodimers associates to form a homooctamer. Individual homodimers can associate to form a homohexamer. Heterodimer with PRMT8. Interacts with BTG1, BTG2, NFATC2IP and IFNAR1. Interacts with and methylates CHTOP, thereby enabling the interaction of CHTOP with the 5FMC complex. Interacts with ILF3 and SUPT5H. Interacts with and methylates FOXO1, leading to the nuclear retention of FOXO1 and the stimulation of FOXO1 transcriptional activity. Methylation of FOXO1 is increased upon oxidative stress. Interacts with and probably methylates ATXN2L. Component of the methylosome, a 20S complex containing at least CLNS1A/pICln, PRMT5/SKB1, WDR77/MEP50, PRMT1 and ERH. Interacts with DHX9 (via RGG region). Interacts (via N-terminus) with HABP4. Interacts with MAP3K5/ASK1; the interaction results in MAP3K5 methylation by PRMT1 which inhibits MAP3K5 activation. Interacts with TRIM48; the interaction results in ubiquitination of PRMT1 by TRIM48, leading to PRMT1 proteasomal degradation and activation of MAP3K5. Interacts with GATOR1 complex; this interaction is S-adenosyl-L-methionine (SAM) dependent and is perturbated by SAMTOR in a SAM-sensitive manner. Interacts with GFI1; promoting recognition and binding of MRE11 and TP53BP1 substrates by PRMT1. In terms of processing, polyubiquitinated at Lys-145 by the SCF(FBXL17) complex, leading to its subsequent degradation. Ubiquitination is regulated by acetylation at Lys-228 and Lys-233. Polyubiquitinated by E3 ubiquitin-protein ligase TRIM48, leading to suppression of MAP3K5/ASK1 methylation and subsequent MAP3K5 activation. Acetylation at Lys-228 and Lys-233 regulates ubiquitination by the SCF(FBXL17) complex. Acetylated at Lys-233 by p300/EP300. Deacetylated at Lys-228 and Lys-233 by SIRT1. In terms of tissue distribution, widely expressed. Expressed strongly in colorectal cancer cells (at protein level). Expressed strongly in colorectal cancer tissues compared to wild-type colon samples (at protein level). Expressed strongly in colorectal cancer tissues compared to wild-type colon samples.

It localises to the nucleus. It is found in the nucleoplasm. Its subcellular location is the cytoplasm. The protein localises to the cytosol. The protein resides in the lysosome membrane. It carries out the reaction L-arginyl-[protein] + 2 S-adenosyl-L-methionine = N(omega),N(omega)-dimethyl-L-arginyl-[protein] + 2 S-adenosyl-L-homocysteine + 2 H(+). It catalyses the reaction L-arginyl-[protein] + S-adenosyl-L-methionine = N(omega)-methyl-L-arginyl-[protein] + S-adenosyl-L-homocysteine + H(+). The catalysed reaction is N(omega)-methyl-L-arginyl-[protein] + S-adenosyl-L-methionine = N(omega),N(omega)-dimethyl-L-arginyl-[protein] + S-adenosyl-L-homocysteine + H(+). Functionally, arginine methyltransferase that methylates (mono and asymmetric dimethylation) the guanidino nitrogens of arginyl residues present in proteins such as ESR1, histone H2, H3 and H4, FMR1, ILF3, HNRNPA1, HNRNPD, NFATC2IP, SUPT5H, TAF15, EWS, HABP4, SERBP1, RBM15, FOXO1, CHTOP, MAP3K5/ASK1, MICU1 and NPRL2. Constitutes the main enzyme that mediates monomethylation and asymmetric dimethylation of histone H4 'Arg-3' (H4R3me1 and H4R3me2a, respectively), a specific tag for epigenetic transcriptional activation. May be involved in the regulation of TAF15 transcriptional activity, act as an activator of estrogen receptor (ER)-mediated transactivation, play a key role in neurite outgrowth and act as a negative regulator of megakaryocytic differentiation, by modulating p38 MAPK pathway. Methylates RBM15, promoting ubiquitination and degradation of RBM15. Methylates MRE11 and TP53BP1, promoting the DNA damage response. Methylates FOXO1 and retains it in the nucleus increasing its transcriptional activity. Methylates CHTOP and this methylation is critical for its 5-hydroxymethylcytosine (5hmC)-binding activity. Methylates MAP3K5/ASK1 at 'Arg-78' and 'Arg-80' which promotes association of MAP3K5 with thioredoxin and negatively regulates MAP3K5 association with TRAF2, inhibiting MAP3K5 stimulation and MAP3K5-induced activation of JNK. Methylates H4R3 in genes involved in glioblastomagenesis in a CHTOP- and/or TET1-dependent manner. Plays a role in regulating alternative splicing in the heart. Methylates NPRL2 at 'Arg-78' leading to inhibition of its GTPase activator activity and then the GATOR1 complex and consequently inducing timely mTORC1 activation under methionine-sufficient conditions. In Homo sapiens (Human), this protein is Protein arginine N-methyltransferase 1.